The following is a 54-amino-acid chain: uncharacterized protein (54 aa).

The signal sequence occupies residues 1–13 (MLLCFHMCQRIMW).

Its subcellular location is the secreted. This is an uncharacterized protein from Saccharomyces cerevisiae (strain ATCC 204508 / S288c) (Baker's yeast).